The chain runs to 211 residues: MSLGLVGRKCGMTRIFTEDGVSIPVTVVQVEPNKVTQVKTVEKDGYNAIQVTTGFKKRSNVNKPMAGHYAKASVEPGRGLWEFTVDAAAEYQVGSSFDATMFEAGQKVDVRGVSKGKGFQGGVKRHNFATQDATHGNSLSHRVHGSTGQNQTPGRVFKNKKMAGHLGNENVTIQSLEVVRVDAENGLLLLKGGIPGSVGGDIIVTPAVKSW.

Q151 carries the N5-methylglutamine modification.

This sequence belongs to the universal ribosomal protein uL3 family. In terms of assembly, part of the 50S ribosomal subunit. Forms a cluster with proteins L14 and L19. Post-translationally, methylated by PrmB.

In terms of biological role, one of the primary rRNA binding proteins, it binds directly near the 3'-end of the 23S rRNA, where it nucleates assembly of the 50S subunit. The chain is Large ribosomal subunit protein uL3 from Francisella tularensis subsp. tularensis (strain FSC 198).